Consider the following 264-residue polypeptide: Thymidylate synthase (264 aa).

R21 contacts dUMP. A (6R)-5,10-methylene-5,6,7,8-tetrahydrofolate-binding site is contributed by H51. 126-127 (RR) is a dUMP binding site. Catalysis depends on C146, which acts as the Nucleophile. DUMP-binding positions include 166-169 (RSAD), N177, and 207-209 (HIY). Position 169 (D169) interacts with (6R)-5,10-methylene-5,6,7,8-tetrahydrofolate. Residue A263 coordinates (6R)-5,10-methylene-5,6,7,8-tetrahydrofolate.

This sequence belongs to the thymidylate synthase family. Bacterial-type ThyA subfamily. Homodimer.

The protein resides in the cytoplasm. The catalysed reaction is dUMP + (6R)-5,10-methylene-5,6,7,8-tetrahydrofolate = 7,8-dihydrofolate + dTMP. The protein operates within pyrimidine metabolism; dTTP biosynthesis. Its function is as follows. Catalyzes the reductive methylation of 2'-deoxyuridine-5'-monophosphate (dUMP) to 2'-deoxythymidine-5'-monophosphate (dTMP) while utilizing 5,10-methylenetetrahydrofolate (mTHF) as the methyl donor and reductant in the reaction, yielding dihydrofolate (DHF) as a by-product. This enzymatic reaction provides an intracellular de novo source of dTMP, an essential precursor for DNA biosynthesis. The polypeptide is Thymidylate synthase (Brucella anthropi (strain ATCC 49188 / DSM 6882 / CCUG 24695 / JCM 21032 / LMG 3331 / NBRC 15819 / NCTC 12168 / Alc 37) (Ochrobactrum anthropi)).